The sequence spans 643 residues: Macrolide export ATP-binding/permease protein MacB (643 aa).

The region spanning 6–244 (IELKGVSRVF…QVRSPFGVRH (239 aa)) is the ABC transporter domain. Residue 42–49 (GASGSGKS) participates in ATP binding. The next 4 membrane-spanning stretches (helical) occupy residues 270–290 (VLTL…LAIG), 518–538 (LTIL…IGVM), 569–589 (FLIE…VIGL), and 606–626 (LMPI…FGYL).

This sequence belongs to the ABC transporter superfamily. Macrolide exporter (TC 3.A.1.122) family. Homodimer.

The protein localises to the cell inner membrane. In terms of biological role, non-canonical ABC transporter that contains transmembrane domains (TMD), which form a pore in the inner membrane, and an ATP-binding domain (NBD), which is responsible for energy generation. Confers resistance against macrolides. This Wolinella succinogenes (strain ATCC 29543 / DSM 1740 / CCUG 13145 / JCM 31913 / LMG 7466 / NCTC 11488 / FDC 602W) (Vibrio succinogenes) protein is Macrolide export ATP-binding/permease protein MacB.